The primary structure comprises 631 residues: Transforming acidic coiled-coil-containing protein 3 (631 aa).

Serine 2 is modified (N-acetylserine). Residue serine 39 is modified to Phosphoserine. A compositionally biased stretch (polar residues) spans 42-59 (ENVPPQSQAKATNVTFQT). Positions 42 to 70 (ENVPPQSQAKATNVTFQTPPRDPQTHRIL) are disordered. At serine 71 the chain carries Phosphoserine. Necessary but not sufficient for spindle localization stretches follow at residues 311–366 (EESF…PMPV) and 384–631 (KPTE…MEKI). Serine 347 is modified (phosphoserine; by AURKA). The interval 363–385 (PMPVAPITNSTQDTEEESGSGKP) is disordered. The stretch at 431-630 (QKDLDAVVNV…CDDLISKMEK (200 aa)) forms a coiled coil.

The protein belongs to the TACC family. In terms of assembly, interacts with GCN5L2 and PCAF. The coiled coil C-terminal region interacts with AH receptor nuclear translocator protein (ARNT) and ARNT2. Interacts with CCDC100/CEP120. Interacts with CKAP5 independently of clathrin. Interacts with CKAP5 and clathrin forming the TACC3/ch-TOG/clathrin complex located at spindle inter-microtubules bridges; TACC3 (phosphorylated at Ser-347 by AURKA) and CLTC are proposed to form a composite microtubule interaction surface. As to expression, embryonically expressed.

It is found in the cytoplasm. The protein resides in the cytoskeleton. The protein localises to the microtubule organizing center. Its subcellular location is the centrosome. It localises to the spindle pole. Plays a role in the microtubule-dependent coupling of the nucleus and the centrosome. Involved in the processes that regulate centrosome-mediated interkinetic nuclear migration (INM) of neural progenitors. Acts as a component of the TACC3/ch-TOG/clathrin complex proposed to contribute to stabilization of kinetochore fibers of the mitotic spindle by acting as inter-microtubule bridge. The TACC3/ch-TOG/clathrin complex is required for the maintenance of kinetochore fiber tension. May be involved in the control of cell growth and differentiation. May have a role in embryonic development. The polypeptide is Transforming acidic coiled-coil-containing protein 3 (Tacc3) (Mus musculus (Mouse)).